Consider the following 252-residue polypeptide: Ditrans,polycis-undecaprenyl-diphosphate synthase ((2E,6E)-farnesyl-diphosphate specific) (252 aa).

The active site involves aspartate 24. Aspartate 24 contributes to the Mg(2+) binding site. Substrate contacts are provided by residues 25 to 28, tryptophan 29, arginine 37, histidine 41, and 69 to 71; these read GNGR and SSE. Asparagine 72 (proton acceptor) is an active-site residue. Substrate contacts are provided by tryptophan 73, arginine 75, and arginine 192. Histidine 197 contacts Mg(2+). 198 to 200 contributes to the substrate binding site; it reads RIS. Glutamate 211 is a binding site for Mg(2+).

The protein belongs to the UPP synthase family. In terms of assembly, homodimer. The cofactor is Mg(2+).

The catalysed reaction is 8 isopentenyl diphosphate + (2E,6E)-farnesyl diphosphate = di-trans,octa-cis-undecaprenyl diphosphate + 8 diphosphate. In terms of biological role, catalyzes the sequential condensation of isopentenyl diphosphate (IPP) with (2E,6E)-farnesyl diphosphate (E,E-FPP) to yield (2Z,6Z,10Z,14Z,18Z,22Z,26Z,30Z,34E,38E)-undecaprenyl diphosphate (di-trans,octa-cis-UPP). UPP is the precursor of glycosyl carrier lipid in the biosynthesis of bacterial cell wall polysaccharide components such as peptidoglycan and lipopolysaccharide. This chain is Ditrans,polycis-undecaprenyl-diphosphate synthase ((2E,6E)-farnesyl-diphosphate specific), found in Yersinia pestis.